The chain runs to 490 residues: Betaine aldehyde dehydrogenase (490 aa).

Thr-26, Ile-27, and Asp-93 together coordinate K(+). Position 150 to 152 (150 to 152) interacts with NAD(+); the sequence is GAW. The active-site Charge relay system is Lys-162. Residue 176 to 179 participates in NAD(+) binding; that stretch reads KPSE. Val-180 is a binding site for K(+). 230-233 lines the NAD(+) pocket; sequence GVAS. Position 246 (Leu-246) interacts with K(+). The Proton acceptor role is filled by Glu-252. 3 residues coordinate NAD(+): Gly-254, Cys-286, and Glu-387. The Nucleophile role is filled by Cys-286. The residue at position 286 (Cys-286) is a Cysteine sulfenic acid (-SOH). K(+) contacts are provided by Lys-457 and Gly-460. Glu-464 (charge relay system) is an active-site residue.

This sequence belongs to the aldehyde dehydrogenase family. Dimer of dimers. It depends on K(+) as a cofactor.

The catalysed reaction is betaine aldehyde + NAD(+) + H2O = glycine betaine + NADH + 2 H(+). It functions in the pathway amine and polyamine biosynthesis; betaine biosynthesis via choline pathway; betaine from betaine aldehyde: step 1/1. Functionally, involved in the biosynthesis of the osmoprotectant glycine betaine. Catalyzes the irreversible oxidation of betaine aldehyde to the corresponding acid. The protein is Betaine aldehyde dehydrogenase of Escherichia coli O9:H4 (strain HS).